A 198-amino-acid polypeptide reads, in one-letter code: MSKEIYAIHPPWLRVTHWLYVVAVVILVMSGWRIYDASPFFPFFIPKEITLGGWLGGALQWHFAAMWLLAVNGLIYLFFNIFSGRLWHKFFPLSLRAIVADLLDALKGKLSHADLSHYNALQRAAYLFAIADIIVIVLSGLVLWKSVQFPILRELLGGYEAARRVHFIGMSALVAFVGVHVAMVALVPRTLIAMIRGH.

The next 4 membrane-spanning stretches (helical) occupy residues Trp12 to Trp32, Phe63 to Ser83, Ala124 to Trp144, and Phe167 to Val187.

It belongs to the HupC/HyaC/HydC family.

Its subcellular location is the cell inner membrane. Part of the YedY1-YedZ1 system that may repair oxidized proteins containing methionine sulfoxide residues (Met-O). The sequence is that of Putative protein-methionine-sulfoxide reductase subunit YedZ1 from Azospira oryzae (strain ATCC BAA-33 / DSM 13638 / PS) (Dechlorosoma suillum).